The primary structure comprises 130 residues: MNDPIGDMLTRIRNAQLRGKSTVSTPGSKLRAWVLDVLADEGYIRGYEKSTDVNGHPTLNIELKYYEGEPVIRELKRVSKPGRRVYMGVKDIPSVRQGLGVSIVSTPKGVMSDANARSNNVGGEVLCTVF.

Belongs to the universal ribosomal protein uS8 family. Part of the 30S ribosomal subunit. Contacts proteins S5 and S12.

One of the primary rRNA binding proteins, it binds directly to 16S rRNA central domain where it helps coordinate assembly of the platform of the 30S subunit. In Ruegeria pomeroyi (strain ATCC 700808 / DSM 15171 / DSS-3) (Silicibacter pomeroyi), this protein is Small ribosomal subunit protein uS8.